The primary structure comprises 480 residues: Endothelial transcription factor GATA-2 (480 aa).

Position 73 is a phosphoserine (serine 73). Asymmetric dimethylarginine is present on arginine 86. The disordered stretch occupies residues 166–208; it reads SGSHLFGFPPTPPKEVSPDPSTTGAASPASSSAGGSVARGEDK. Low complexity predominate over residues 183–201; the sequence is PDPSTTGAASPASSSAGGS. Phosphoserine is present on serine 192. GATA-type zinc fingers lie at residues 295–319 and 349–373; these read CVNC…CNAC and CANC…CNAC. Lysine 389 is covalently cross-linked (Glycyl lysine isopeptide (Lys-Gly) (interchain with G-Cter in SUMO2)). A disordered region spans residues 457 to 480; that stretch reads TPIHPSSSLSFGHPHPSSMVTAMG.

As to quaternary structure, interacts with BRD3. Interacts with AR and CCAR1. Interacts with MDFIC.

It localises to the nucleus. Its function is as follows. Transcriptional activator which regulates endothelin-1 gene expression in endothelial cells. Binds to the consensus sequence 5'-AGATAG-3'. The chain is Endothelial transcription factor GATA-2 (Gata2) from Mus musculus (Mouse).